The primary structure comprises 357 residues: Nitronate monooxygenase npaC (357 aa).

Positions 167, 172, and 206 each coordinate FMN.

This sequence belongs to the nitronate monooxygenase family. NMO class I subfamily. Requires FMN as cofactor.

Nitronate monooxygenase; part of the gene cluster that mediates the biosynthesis of the deadly neurotoxic nitroalkane 3-nitropropanoic acid (3-NPA) that acts as an antimetabolite of succinate and irreversibly inhibits succinate dehydrogenase and disrupts mitochondrial oxidative phosphorylation. Catalyzes the oxidation of 3-NPA to nitrite and malonic semialdehyde. NpaC is not conserved in all fungal npa clusters and, while it is possible that it serves as a self-protection mechanism against accumulation of 3-NPA (by npaA and npaB) in the producing host, the more likely scenario may be the three enzymes representing an alternative catabolic pathway of aspartate to generate readily metabolizable nitrogen and carbon sources. This chain is Nitronate monooxygenase npaC, found in Metarhizium robertsii (strain ARSEF 23 / ATCC MYA-3075) (Metarhizium anisopliae (strain ARSEF 23)).